Consider the following 337-residue polypeptide: Ornithine carbamoyltransferase (337 aa).

Residues S57–T60, Q84, R108, and H135–Q138 each bind carbamoyl phosphate. Residues N167, D231, and S235 to M236 each bind L-ornithine. Carbamoyl phosphate is bound by residues C272–L273 and R317.

This sequence belongs to the aspartate/ornithine carbamoyltransferase superfamily. OTCase family.

The protein localises to the cytoplasm. It catalyses the reaction carbamoyl phosphate + L-ornithine = L-citrulline + phosphate + H(+). It participates in amino-acid degradation; L-arginine degradation via ADI pathway; carbamoyl phosphate from L-arginine: step 2/2. Its function is as follows. Reversibly catalyzes the transfer of the carbamoyl group from carbamoyl phosphate (CP) to the N(epsilon) atom of ornithine (ORN) to produce L-citrulline. This chain is Ornithine carbamoyltransferase, found in Streptococcus equi subsp. equi (strain 4047).